Reading from the N-terminus, the 381-residue chain is Guanine nucleotide-binding protein subunit alpha-12 (381 aa).

Cys-11 is lipidated: S-palmitoyl cysteine. One can recognise a G-alpha domain in the interval 56-381 (RLVKILLLGA…QENLKDIMLQ (326 aa)). Positions 59 to 72 (KILLLGAGESGKST) are G1 motif. GTP contacts are provided by residues 67–72 (ESGKST) and 202–205 (LLAR). Ser-71 provides a ligand contact to Mg(2+). The segment at 200-208 (DILLARKAT) is G2 motif. Residue Thr-208 participates in Mg(2+) binding. Thr-208 carries the post-translational modification Phosphothreonine. The tract at residues 223-232 (FKMVDVGGQR) is G3 motif. Residues 292–299 (ILFLNKMD) form a G4 motif region. GTP contacts are provided by residues 296 to 299 (NKMD) and Ala-353. The tract at residues 351-356 (TTAIDT) is G5 motif.

The protein belongs to the G-alpha family. G(12) subfamily. In terms of assembly, g proteins are composed of 3 units; alpha, beta and gamma. The alpha chain contains the guanine nucleotide binding site. Interacts with UBXD5. Interacts (in GTP-bound form) with PPP5C (via TPR repeats); activates PPP5C phosphatase activity and translocates PPP5C to the cell membrane. Interacts with RGS22. Interacts (via N-terminus) with NAPA; the interaction promotes CDH5 localization to plasma membrane. Interacts with CTNND1 (via N-terminus); the interaction regulates CDH1-mediated cell-cell adhesion. Interacts with PPP2R1A; the interaction promotes protein phosphatase 2A activation causing dephosphorylation of MAPT. Interacts (in GTP-bound form) with ARHGEF1. Interacts (in GTP-bound form) with ARHGEF11 (via RGS domain). Interacts (in GTP-bound form) with ARHGEF12 (via RGS domain).

Its subcellular location is the cell membrane. The protein localises to the lateral cell membrane. It is found in the cytoplasm. In terms of biological role, guanine nucleotide-binding proteins (G proteins) are involved as modulators or transducers in various transmembrane signaling systems. Activates effector molecule RhoA by binding and activating RhoGEFs (ARHGEF12/LARG). GNA12-dependent Rho signaling subsequently regulates transcription factor AP-1 (activating protein-1). GNA12-dependent Rho signaling also regulates protein phosphatese 2A activation causing dephosphorylation of its target proteins. Promotes tumor cell invasion and metastasis by activating RhoA/ROCK signaling pathway and up-regulating pro-inflammatory cytokine production. Inhibits CDH1-mediated cell adhesion in process independent from Rho activation. Together with NAPA promotes CDH5 localization to plasma membrane. May play a role in the control of cell migration through the TOR signaling cascade. This Homo sapiens (Human) protein is Guanine nucleotide-binding protein subunit alpha-12 (GNA12).